Here is a 181-residue protein sequence, read N- to C-terminus: K99 fimbrial protein (181 aa).

Positions 1 to 22 (MKKTLLAIILGGMAFATTNASA) are cleaved as a signal peptide. C38 and C79 are disulfide-bonded.

The protein belongs to the fimbrial protein family.

It localises to the fimbrium. Its function is as follows. Fimbriae (also called pili), polar filaments radiating from the surface of the bacterium to a length of 0.5-1.5 micrometers and numbering 100-300 per cell, enable bacteria to colonize the epithelium of specific host organs. In terms of biological role, fanC is the main component of the K99 fimbriae. In Escherichia coli, this protein is K99 fimbrial protein (fanC).